A 506-amino-acid polypeptide reads, in one-letter code: Protein MGF 505-9R (506 aa).

This sequence belongs to the asfivirus MGF 505 family.

Its function is as follows. Plays a role in virus cell tropism, and may be required for efficient virus replication in macrophages. In Ornithodoros (relapsing fever ticks), this protein is Protein MGF 505-9R.